The chain runs to 295 residues: (R)-3-hydroxydecanoyl-ACP:CoA transacylase (295 aa).

Residues 28–254 form the AB hydrolase-1 domain; that stretch reads NTIILINGSL…VIRDAGHFLD (227 aa).

The protein operates within polyester biosynthesis; polyhydroxyalkanoate biosynthesis. In terms of biological role, catalyzes the transfer of the acyl moiety from in vitro synthesized 3-hydroxydecanoyl-CoA to acyl carrier protein. The chain is (R)-3-hydroxydecanoyl-ACP:CoA transacylase (phaG) from Pseudomonas putida (strain ATCC 47054 / DSM 6125 / CFBP 8728 / NCIMB 11950 / KT2440).